We begin with the raw amino-acid sequence, 313 residues long: Pyrimidine-specific ribonucleoside hydrolase RihB (313 aa).

Catalysis depends on Asp11, which acts as the Proton acceptor. Ca(2+)-binding residues include Asp11, Asp16, and Val124. Gln227 and His239 together coordinate substrate. A Ca(2+)-binding site is contributed by Asp240.

Belongs to the IUNH family. RihB subfamily. Homotetramer. The cofactor is Ca(2+).

The enzyme catalyses a pyrimidine ribonucleoside + H2O = a pyrimidine nucleobase + D-ribose. Functionally, hydrolyzes cytidine or uridine to ribose and cytosine or uracil, respectively. Has a clear preference for cytidine over uridine. Strictly specific for ribonucleosides. This Escherichia coli O1:K1 / APEC protein is Pyrimidine-specific ribonucleoside hydrolase RihB.